Reading from the N-terminus, the 627-residue chain is (-)-alpha-terpineol synthase, chloroplastic (627 aa).

A chloroplast-targeting transit peptide spans 1-52; the sequence is MDLISVLPSASKSCVCLHKPLSSSTHKLKPFCKTIRILVMPRRWEFARPSMS. Mg(2+)-binding residues include aspartate 378, aspartate 382, and aspartate 530. The DDXXD motif motif lies at 378 to 382; sequence DDMYD.

Belongs to the terpene synthase family. Tpsd subfamily. The cofactor is Mg(2+). Mn(2+) serves as cofactor.

Its subcellular location is the plastid. The protein localises to the chloroplast. The catalysed reaction is (2E)-geranyl diphosphate + H2O = (S)-alpha-terpineol + diphosphate. It functions in the pathway terpene metabolism; oleoresin biosynthesis. Involved in defensive oleoresin formation in conifers in response to insect attack or other injury. Involved in monoterpene (C10) olefins biosynthesis. Produces 57.3% alpha-terpineol (15.1% (+)/84.9% (-)), 27.6% limonene (25.2% (+)/74.8% (-)), 8% terpinolene, 4.7% beta-pinene (14.8% (+)/85.2% (-)), 1.3% alpha-pinene (100% (+)) and 1.1% myrcene. The sequence is that of (-)-alpha-terpineol synthase, chloroplastic (PT10) from Pinus taeda (Loblolly pine).